A 168-amino-acid chain; its full sequence is Transcription elongation factor GreB (168 aa).

A coiled-coil region spans residues 61–84 (KKMLREIDSRVRFLRKRLENLKVV).

This sequence belongs to the GreA/GreB family. GreB subfamily.

Necessary for efficient RNA polymerase transcription elongation past template-encoded arresting sites. The arresting sites in DNA have the property of trapping a certain fraction of elongating RNA polymerases that pass through, resulting in locked ternary complexes. Cleavage of the nascent transcript by cleavage factors such as GreA or GreB allows the resumption of elongation from the new 3'terminus. GreB releases sequences of up to 9 nucleotides in length. This Pseudomonas aeruginosa (strain ATCC 15692 / DSM 22644 / CIP 104116 / JCM 14847 / LMG 12228 / 1C / PRS 101 / PAO1) protein is Transcription elongation factor GreB.